Reading from the N-terminus, the 156-residue chain is Ribosomal RNA large subunit methyltransferase H (156 aa).

S-adenosyl-L-methionine-binding positions include Leu-73, Gly-104, and 123 to 128; that span reads LSPLTM.

This sequence belongs to the RNA methyltransferase RlmH family. Homodimer.

Its subcellular location is the cytoplasm. The enzyme catalyses pseudouridine(1915) in 23S rRNA + S-adenosyl-L-methionine = N(3)-methylpseudouridine(1915) in 23S rRNA + S-adenosyl-L-homocysteine + H(+). Specifically methylates the pseudouridine at position 1915 (m3Psi1915) in 23S rRNA. This chain is Ribosomal RNA large subunit methyltransferase H, found in Proteus mirabilis (strain HI4320).